A 304-amino-acid chain; its full sequence is Nod factor export ATP-binding protein I (304 aa).

The ABC transporter domain maps to 6–236; that stretch reads IDLAGVKKSF…HIGCQVIEIF (231 aa). 38–45 contacts ATP; sequence GPNGAGKS.

Belongs to the ABC transporter superfamily. Lipooligosaccharide exporter (TC 3.A.1.102) family. As to quaternary structure, the complex is composed of two ATP-binding proteins (NodI) and two transmembrane proteins (NodJ).

Its subcellular location is the cell inner membrane. Part of the ABC transporter complex NodIJ involved in the export of the nodulation factors (Nod factors), the bacterial signal molecules that induce symbiosis and subsequent nodulation induction. Nod factors are LCO (lipo-chitin oligosaccharide), a modified beta-1,4-linked N-acetylglucosamine oligosaccharide. This subunit is responsible for energy coupling to the transport system. In Rhizobium sp. (strain N33), this protein is Nod factor export ATP-binding protein I.